We begin with the raw amino-acid sequence, 591 residues long: Metalloendopeptidase OPG085 (591 aa).

Position 41 (His41) interacts with Zn(2+). The active site involves Glu44. Zn(2+) is bound by residues His45 and Glu112.

It belongs to the peptidase M44 family. It depends on Zn(2+) as a cofactor. Undergoes proteolytic processing during the course of infection. May be cleaved into 46 kDa and 22 kDa products (Potential).

Its subcellular location is the virion. Probably involved in maturation of some viral proteins by processing them preferentially at Ala-Gly-|-Ser/Thr/Lys motifs. Does not seem to be responsible for the cleavage of major core proteins. In Monkeypox virus, this protein is Metalloendopeptidase OPG085 (OPG085).